The chain runs to 37 residues: Non-specific lipid-transfer protein (37 aa).

This sequence belongs to the plant LTP family.

Plant non-specific lipid-transfer proteins transfer phospholipids as well as galactolipids across membranes. May play a role in wax or cutin deposition in the cell walls of expanding epidermal cells and certain secretory tissues. This chain is Non-specific lipid-transfer protein, found in Artemisia vulgaris (Mugwort).